The chain runs to 134 residues: Large ribosomal subunit protein bL20 (134 aa).

Belongs to the bacterial ribosomal protein bL20 family.

In terms of biological role, binds directly to 23S ribosomal RNA and is necessary for the in vitro assembly process of the 50S ribosomal subunit. It is not involved in the protein synthesizing functions of that subunit. This chain is Large ribosomal subunit protein bL20, found in Rhizobium rhizogenes (strain K84 / ATCC BAA-868) (Agrobacterium radiobacter).